Here is a 302-residue protein sequence, read N- to C-terminus: Pyridoxal 5'-phosphate synthase subunit PdxS (302 aa).

Residue Asp-32 participates in D-ribose 5-phosphate binding. Lys-89 acts as the Schiff-base intermediate with D-ribose 5-phosphate in catalysis. Gly-161 provides a ligand contact to D-ribose 5-phosphate. Arg-173 contributes to the D-glyceraldehyde 3-phosphate binding site. D-ribose 5-phosphate contacts are provided by residues Gly-222 and 243–244 (GS). A disordered region spans residues 276 to 302 (ASNPGKGMKGEANADLSEGEKLQTRGV). The segment covering 293–302 (EGEKLQTRGV) has biased composition (basic and acidic residues).

It belongs to the PdxS/SNZ family. In terms of assembly, in the presence of PdxT, forms a dodecamer of heterodimers.

The catalysed reaction is aldehydo-D-ribose 5-phosphate + D-glyceraldehyde 3-phosphate + L-glutamine = pyridoxal 5'-phosphate + L-glutamate + phosphate + 3 H2O + H(+). Its pathway is cofactor biosynthesis; pyridoxal 5'-phosphate biosynthesis. Its function is as follows. Catalyzes the formation of pyridoxal 5'-phosphate from ribose 5-phosphate (RBP), glyceraldehyde 3-phosphate (G3P) and ammonia. The ammonia is provided by the PdxT subunit. Can also use ribulose 5-phosphate and dihydroxyacetone phosphate as substrates, resulting from enzyme-catalyzed isomerization of RBP and G3P, respectively. In Haloquadratum walsbyi (strain DSM 16790 / HBSQ001), this protein is Pyridoxal 5'-phosphate synthase subunit PdxS.